Consider the following 329-residue polypeptide: Flotillin-like protein FloA (329 aa).

Residues 4 to 24 (IWGFLILILVLIFLGVFFSFV) form a helical membrane-spanning segment.

It belongs to the flotillin-like FloA family. As to quaternary structure, homooligomerizes.

The protein localises to the cell membrane. The protein resides in the membrane raft. Functionally, found in functional membrane microdomains (FMM) that may be equivalent to eukaryotic membrane rafts. FMMs are highly dynamic and increase in number as cells age. Flotillins are thought to be important factors in membrane fluidity. This chain is Flotillin-like protein FloA, found in Dictyoglomus turgidum (strain DSM 6724 / Z-1310).